A 373-amino-acid polypeptide reads, in one-letter code: sn-glycerol-3-phosphate import ATP-binding protein UgpC (373 aa).

In terms of domain architecture, ABC transporter spans 4–235; sequence LTLSNITKSY…PASVFVATFI (232 aa). 37–44 provides a ligand contact to ATP; it reads GPSGCGKS.

The protein belongs to the ABC transporter superfamily. sn-glycerol-3-phosphate importer (TC 3.A.1.1.3) family. In terms of assembly, the complex is composed of two ATP-binding proteins (UgpC), two transmembrane proteins (UgpA and UgpE) and a solute-binding protein (UgpB).

The protein localises to the cell inner membrane. The catalysed reaction is sn-glycerol 3-phosphate(out) + ATP + H2O = sn-glycerol 3-phosphate(in) + ADP + phosphate + H(+). Part of the ABC transporter complex UgpBAEC involved in sn-glycerol-3-phosphate (G3P) import. Responsible for energy coupling to the transport system. This is sn-glycerol-3-phosphate import ATP-binding protein UgpC from Psychromonas ingrahamii (strain DSM 17664 / CCUG 51855 / 37).